The following is a 118-amino-acid chain: NADH-quinone oxidoreductase subunit A 2 (118 aa).

3 helical membrane-spanning segments follow: residues 5-25 (YLPI…SVIF), 62-82 (LIAM…PWAV), and 87-107 (LGMF…VGYV).

Belongs to the complex I subunit 3 family. NDH-1 is composed of 14 different subunits. Subunits NuoA, H, J, K, L, M, N constitute the membrane sector of the complex.

The protein localises to the cell inner membrane. It catalyses the reaction a quinone + NADH + 5 H(+)(in) = a quinol + NAD(+) + 4 H(+)(out). In terms of biological role, NDH-1 shuttles electrons from NADH, via FMN and iron-sulfur (Fe-S) centers, to quinones in the respiratory chain. The immediate electron acceptor for the enzyme in this species is believed to be ubiquinone. Couples the redox reaction to proton translocation (for every two electrons transferred, four hydrogen ions are translocated across the cytoplasmic membrane), and thus conserves the redox energy in a proton gradient. The chain is NADH-quinone oxidoreductase subunit A 2 from Citrifermentans bemidjiense (strain ATCC BAA-1014 / DSM 16622 / JCM 12645 / Bem) (Geobacter bemidjiensis).